A 767-amino-acid polypeptide reads, in one-letter code: MSQETIISNLIDMLKVSAGWDREANEISGRLFHKLMDMSSTETISQYMSLFGPLLEPHILEFIQNYEQEIDEVCLEYRASYDFMCLRNCGILPAKRFYDTYVLPPRTEMNGKYESIPHFFARIAAYCAWNCIMCEPLKDTLVYVQKRDWNVEIKTDMQIFKYFYKVISSQLVCCATPVMRSAGVAGENLSSCFIIAPTLDTEKSTISSIFGELAPLLASRSGVGVDVTKFSFGGKNIHSCLKLINAQVEFFNDKSVRPVSVATYIEVWHCQIHEFLSAKLPENPDRCNSIFQGVCVPSLFFKMYESDPNGLWYLFDPQDAPNLTRLYGLEFEEEYLRLVSEKKYKQSVTLKSLMFSLINTIIKTGSPYVISKEAMNKHHWYETQGEAINCSNLCAEIVQQPKQFTSTCNLANVCLPKCLNSSNFPYTCSNTAQFDFSKLEYAVQAAVFIINACILSPSPTSSATVGQRERSMGIGCHGLADVFSEMGYGYLDLESECLDRDIFETMYYTAVKTSSEICSVGKGQPFAGFRKSKLAHGVFHWATWDAMPQRVPMKQWIHLQDNIKKFGVFNSQFIALMPTAGTSQLTGYTDSFYPYFANMSSKVSNKEEIMKPNITFLKNVKPQDLCTVRFYGGDVSMMPEDVSTRYKHFLTAFDYCPEAQMRRASIRAPYVDQSQSLTLFLTEENVQSAKYLKDLLLLGFRLGLKTIMYYCRVKKTTKLLQLECLKLDEHTKKDAQIVLADLARELPDSHKTEDACPLDQSECIACQ.

Residues T176, 191–192, G222, 392–396, and 578–582 contribute to the substrate site; these read SC, NLCAE, and PTAGT. C192 and C408 are oxidised to a cystine. The active-site Proton acceptor is the N392. C394 acts as the Cysteine radical intermediate in catalysis. The active-site Proton acceptor is E396.

The protein belongs to the ribonucleoside diphosphate reductase large chain family. As to quaternary structure, heterotetramer composed of a homodimer of the large subunit (R1) and a homodimer of the small subunit (R2). Larger multisubunit protein complex are also active, composed of (R1)n(R2)n.

It carries out the reaction a 2'-deoxyribonucleoside 5'-diphosphate + [thioredoxin]-disulfide + H2O = a ribonucleoside 5'-diphosphate + [thioredoxin]-dithiol. Functionally, ribonucleoside-diphosphate reductase holoenzyme provides the precursors necessary for viral DNA synthesis. Allows virus growth in non-dividing cells, as well as reactivation from latency in infected hosts. Catalyzes the biosynthesis of deoxyribonucleotides from the corresponding ribonucleotides. The sequence is that of Ribonucleoside-diphosphate reductase large subunit from Saimiri sciureus (Common squirrel monkey).